The chain runs to 25 residues: Caerin-1.9 (25 aa).

The residue at position 25 (Leu-25) is a Leucine amide.

It belongs to the frog skin active peptide (FSAP) family. Caerin subfamily. In terms of tissue distribution, expressed by the skin dorsal glands.

It is found in the secreted. Antimicrobial peptide. Adopts an alpha helical conformation which can disrupt bacterial membranes. Strongly inhibits the formation of NO by neuronal nitric oxide synthase (nNOS) at micromolar concentrations. Acts by a non-competitive mechanism, probably by binding to calcium/calmodulin and as a consequence blocking calmodulin attachment to nNOS. The chain is Caerin-1.9 from Ranoidea chloris (Red-eyed tree frog).